We begin with the raw amino-acid sequence, 293 residues long: 4-diphosphocytidyl-2-C-methyl-D-erythritol kinase (293 aa).

Lys-10 is an active-site residue. An ATP-binding site is contributed by 96–106; it reads PIAAGLGGGSS. Residue Asp-138 is part of the active site.

Belongs to the GHMP kinase family. IspE subfamily.

The enzyme catalyses 4-CDP-2-C-methyl-D-erythritol + ATP = 4-CDP-2-C-methyl-D-erythritol 2-phosphate + ADP + H(+). It functions in the pathway isoprenoid biosynthesis; isopentenyl diphosphate biosynthesis via DXP pathway; isopentenyl diphosphate from 1-deoxy-D-xylulose 5-phosphate: step 3/6. In terms of biological role, catalyzes the phosphorylation of the position 2 hydroxy group of 4-diphosphocytidyl-2C-methyl-D-erythritol. The polypeptide is 4-diphosphocytidyl-2-C-methyl-D-erythritol kinase (Caulobacter sp. (strain K31)).